We begin with the raw amino-acid sequence, 493 residues long: Trans-aconitate decarboxylase 1 (493 aa).

Residues 1–22 (MAPALNANPTTKRDELSAPSAS) form a disordered region.

Belongs to the class-II fumarase/aspartase family.

The protein localises to the cytoplasm. It is found in the cytosol. The protein resides in the nucleus. The catalysed reaction is trans-aconitate + H(+) = itaconate + CO2. Its pathway is secondary metabolite biosynthesis. Functionally, trans-aconitate decarboxylase; part of the gene cluster that mediates the biosynthesis of itaconic acid and 2-hydroxyparaconate. Cis-aconitate is secreted by the mitochondrial tricarboxylate transporter MTT1. In the cytosol cis-aconitate is converted into trans-aconitate via isomerization by the aconitate-delta-isomerase ADI1. Decarboxylation of trans-aconitate by the trans-aconitate decarboxylase TAD1 then leads then to the production of itaconic acid. The cytochrome P450 monooxygenase CYP3 further converts itaconate to 2-hydroxyparaconate via oxidation of the double bond, leading to a transient epoxide, which can subsequently be lactonized to produce 2-hydroxyparaconate. Secretion of itaconate and possibly 2-hydroxyparaconate into the medium is mediated by the major facilitator ITP1. The glyoxalase domain-containing protein RDO1 is not involved in the biosynthesis of itaconate and 2-hydroxyparaconate, however, it might play a role in the further conversion of 2-hydroxyparaconate to itatartarate. This chain is Trans-aconitate decarboxylase 1, found in Mycosarcoma maydis (Corn smut fungus).